The sequence spans 563 residues: DNA mismatch repair protein MutL (563 aa).

This sequence belongs to the DNA mismatch repair MutL/HexB family.

Functionally, this protein is involved in the repair of mismatches in DNA. It is required for dam-dependent methyl-directed DNA mismatch repair. May act as a 'molecular matchmaker', a protein that promotes the formation of a stable complex between two or more DNA-binding proteins in an ATP-dependent manner without itself being part of a final effector complex. This chain is DNA mismatch repair protein MutL, found in Trichormus variabilis (strain ATCC 29413 / PCC 7937) (Anabaena variabilis).